Here is a 426-residue protein sequence, read N- to C-terminus: Dihydroorotase (426 aa).

Residues His62 and His64 each contribute to the Zn(2+) site. Substrate-binding positions include 64–66 and Asn96; that span reads HLR. Zn(2+) is bound by residues Asp154, His181, and His234. Residue Asn280 coordinates substrate. Residue Asp307 participates in Zn(2+) binding. Residue Asp307 is part of the active site. Residues His311 and 325-326 contribute to the substrate site; that span reads FG.

Belongs to the metallo-dependent hydrolases superfamily. DHOase family. Class I DHOase subfamily. Zn(2+) is required as a cofactor.

It carries out the reaction (S)-dihydroorotate + H2O = N-carbamoyl-L-aspartate + H(+). It participates in pyrimidine metabolism; UMP biosynthesis via de novo pathway; (S)-dihydroorotate from bicarbonate: step 3/3. In terms of biological role, catalyzes the reversible cyclization of carbamoyl aspartate to dihydroorotate. The chain is Dihydroorotase from Desulforapulum autotrophicum (strain ATCC 43914 / DSM 3382 / VKM B-1955 / HRM2) (Desulfobacterium autotrophicum).